The sequence spans 927 residues: Probable UDP-N-acetylglucosamine--peptide N-acetylglucosaminyltransferase SPINDLY (927 aa).

The interval 1–31 (MGRPGMDSSEGRESNGVVPERNGGAVPAKQQ) is disordered. TPR repeat units follow at residues 34 to 67 (GKDT…DEAN), 68 to 101 (VEAL…DPGN), 102 to 135 (ACAL…DPSY), 143 to 176 (AIVL…DSHY), 177 to 210 (APAY…RPLY), 211 to 244 (AEAY…SPNF), 252 to 285 (AIAL…NWHY), 286 to 319 (ADAM…NPRC), 320 to 353 (AEAC…KPNF), 355 to 387 (QSLN…NSTY), and 388 to 421 (AEAY…DPDS). The segment at 422–927 (RNAGQNRLLA…KVEANGHISR (506 aa)) is catalytic region.

This sequence belongs to the glycosyltransferase 41 family. O-GlcNAc transferase subfamily.

It localises to the nucleus. The catalysed reaction is L-seryl-[protein] + UDP-N-acetyl-alpha-D-glucosamine = 3-O-(N-acetyl-beta-D-glucosaminyl)-L-seryl-[protein] + UDP + H(+). The enzyme catalyses L-threonyl-[protein] + UDP-N-acetyl-alpha-D-glucosamine = 3-O-(N-acetyl-beta-D-glucosaminyl)-L-threonyl-[protein] + UDP + H(+). It functions in the pathway protein modification; protein glycosylation. In terms of biological role, probable O-linked N-acetylglucosamine transferase (OGT) involved in various processes such as gibberellin (GA) signaling pathway. OGTs catalyze the addition of nucleotide-activated sugars directly onto the polypeptide through O-glycosidic linkage with the hydroxyl of serine or threonine. Probably acts by adding O-linked sugars to yet unknown proteins. The chain is Probable UDP-N-acetylglucosamine--peptide N-acetylglucosaminyltransferase SPINDLY (SPY) from Oryza sativa subsp. japonica (Rice).